The following is a 294-amino-acid chain: Acetyl-coenzyme A carboxylase carboxyl transferase subunit beta (294 aa).

A CoA carboxyltransferase N-terminal domain is found at 30–294 (IMTKCPECKK…PEAGGESDGE (265 aa)). Cys34, Cys37, Cys53, and Cys56 together coordinate Zn(2+). The segment at 34 to 56 (CPECKKIMYTKELQKNLMVCNYC) adopts a C4-type zinc-finger fold.

This sequence belongs to the AccD/PCCB family. In terms of assembly, acetyl-CoA carboxylase is a heterohexamer composed of biotin carboxyl carrier protein (AccB), biotin carboxylase (AccC) and two subunits each of ACCase subunit alpha (AccA) and ACCase subunit beta (AccD). Zn(2+) serves as cofactor.

The protein localises to the cytoplasm. The catalysed reaction is N(6)-carboxybiotinyl-L-lysyl-[protein] + acetyl-CoA = N(6)-biotinyl-L-lysyl-[protein] + malonyl-CoA. It functions in the pathway lipid metabolism; malonyl-CoA biosynthesis; malonyl-CoA from acetyl-CoA: step 1/1. Component of the acetyl coenzyme A carboxylase (ACC) complex. Biotin carboxylase (BC) catalyzes the carboxylation of biotin on its carrier protein (BCCP) and then the CO(2) group is transferred by the transcarboxylase to acetyl-CoA to form malonyl-CoA. This chain is Acetyl-coenzyme A carboxylase carboxyl transferase subunit beta, found in Listeria innocua serovar 6a (strain ATCC BAA-680 / CLIP 11262).